The sequence spans 1180 residues: Phosphatidylinositol 4-kinase (1180 aa).

The 206-residue stretch at 1–206 (MNKISDTIII…SVYLHSPSTS (206 aa)) folds into the PIK helical domain. 5 disordered regions span residues 15-84 (NEDE…KHKE), 257-327 (ENDH…ENDN), 355-391 (TSPI…NNIN), 768-799 (TISN…IPHS), and 832-894 (AISP…SPFG). Positions 38 to 74 (NNNNNNILTNVNNNKNNTITSSGGSDSSSSSSNNNNN) are enriched in low complexity. Positions 75 to 84 (KIKKSKKHKE) are enriched in basic residues. Positions 257 to 270 (ENDHHIENDPKKDI) are enriched in basic and acidic residues. Composition is skewed to low complexity over residues 271–325 (NSNN…SGEN), 364–391 (NNNN…NNIN), 768–793 (TISN…PTLP), and 835–879 (PPSQ…SPTN). Residues 895-1164 (ESWQEKIERY…LISYSIDHFK (270 aa)) form the PI3K/PI4K catalytic domain. Positions 901 to 907 (IERYKKI) are G-loop. Residues 1030-1038 (QIKDRHNGN) form a catalytic loop region. Positions 1049 to 1073 (HIDFGFILSNSPGNISFESAPFKLT) are activation loop.

This sequence belongs to the PI3/PI4-kinase family. Type III PI4K subfamily.

It carries out the reaction a 1,2-diacyl-sn-glycero-3-phospho-(1D-myo-inositol) + ATP = a 1,2-diacyl-sn-glycero-3-phospho-(1D-myo-inositol 4-phosphate) + ADP + H(+). In terms of biological role, acts on phosphatidylinositol (PtdIns) in the first committed step in the production of the second messenger inositol-1,4,5,-trisphosphate. This chain is Phosphatidylinositol 4-kinase (pikD), found in Dictyostelium discoideum (Social amoeba).